The sequence spans 163 residues: Fatty acid-binding protein homolog (163 aa).

Positions 1–23 (MRCLVALILTVLIVTPEVEAKTL) are cleaved as a signal peptide.

This sequence belongs to the calycin superfamily. Fatty-acid binding protein (FABP) family. As to expression, abundant in the fluid surrounding the developing embryo of Ascaris suum.

In terms of biological role, may play a role in sequestering potentially toxic fatty acids and their peroxidation products, or it may be involved in the maintenance of the impermeable lipid layer of the eggshell. The sequence is that of Fatty acid-binding protein homolog from Ascaris suum (Pig roundworm).